The primary structure comprises 347 residues: Holliday junction branch migration complex subunit RuvB (347 aa).

Positions 1–183 are large ATPase domain (RuvB-L); sequence MTDVPRMVTP…FGIPVRLNFY (183 aa). ATP-binding positions include Leu-22, Arg-23, Gly-64, Lys-67, Thr-68, Thr-69, 130 to 132, Arg-173, Tyr-183, and Arg-220; that span reads EDF. Thr-68 is a binding site for Mg(2+). The small ATPAse domain (RuvB-S) stretch occupies residues 184 to 254; sequence TVDELEKIVS…IADHALGALE (71 aa). The segment at 257 to 347 is head domain (RuvB-H); that stretch reads AAGLDAMDRR…QFGLFGGEDE (91 aa). DNA-binding residues include Arg-293, Arg-312, and Arg-317.

This sequence belongs to the RuvB family. Homohexamer. Forms an RuvA(8)-RuvB(12)-Holliday junction (HJ) complex. HJ DNA is sandwiched between 2 RuvA tetramers; dsDNA enters through RuvA and exits via RuvB. An RuvB hexamer assembles on each DNA strand where it exits the tetramer. Each RuvB hexamer is contacted by two RuvA subunits (via domain III) on 2 adjacent RuvB subunits; this complex drives branch migration. In the full resolvosome a probable DNA-RuvA(4)-RuvB(12)-RuvC(2) complex forms which resolves the HJ.

The protein localises to the cytoplasm. It catalyses the reaction ATP + H2O = ADP + phosphate + H(+). Its function is as follows. The RuvA-RuvB-RuvC complex processes Holliday junction (HJ) DNA during genetic recombination and DNA repair, while the RuvA-RuvB complex plays an important role in the rescue of blocked DNA replication forks via replication fork reversal (RFR). RuvA specifically binds to HJ cruciform DNA, conferring on it an open structure. The RuvB hexamer acts as an ATP-dependent pump, pulling dsDNA into and through the RuvAB complex. RuvB forms 2 homohexamers on either side of HJ DNA bound by 1 or 2 RuvA tetramers; 4 subunits per hexamer contact DNA at a time. Coordinated motions by a converter formed by DNA-disengaged RuvB subunits stimulates ATP hydrolysis and nucleotide exchange. Immobilization of the converter enables RuvB to convert the ATP-contained energy into a lever motion, pulling 2 nucleotides of DNA out of the RuvA tetramer per ATP hydrolyzed, thus driving DNA branch migration. The RuvB motors rotate together with the DNA substrate, which together with the progressing nucleotide cycle form the mechanistic basis for DNA recombination by continuous HJ branch migration. Branch migration allows RuvC to scan DNA until it finds its consensus sequence, where it cleaves and resolves cruciform DNA. The protein is Holliday junction branch migration complex subunit RuvB of Nitrobacter hamburgensis (strain DSM 10229 / NCIMB 13809 / X14).